Consider the following 932-residue polypeptide: RNA-binding protein 12 (932 aa).

The segment at 96-116 (DIPPANASRSGPPPSSGMSSR) is disordered. The span at 98 to 116 (PPANASRSGPPPSSGMSSR) shows a compositional bias: low complexity. The 76-residue stretch at 304 to 379 (LYVSVHGMPF…RYVEVSPATE (76 aa)) folds into the RRM 1 domain. Phosphoserine is present on residues S352 and S375. Composition is skewed to polar residues over residues 392–401 (KQNMGPSGQT) and 408–417 (LPRSKSPSGQ). Positions 392 to 424 (KQNMGPSGQTHPPPQTLPRSKSPSGQKRSRSRS) are disordered. Phosphoserine occurs at positions 420, 422, and 424. One can recognise an RRM 2 domain in the interval 430 to 507 (FCVYLKGLPF…RFIQVHPITK (78 aa)). Residue S525 is modified to Phosphoserine. Residues 717–734 (NGPPFNFPGNFGGSNAFG) show a composition bias toward low complexity. Residues 717–853 (NGPPFNFPGN…PGFASSSGKP (137 aa)) are disordered. Residues 783 to 811 (SGFGGGPQNFGNGPGSLGGPPGFGSGPPG) show a composition bias toward gly residues. Residues 824-836 (AFGPGPGPGPGPG) show a composition bias toward pro residues. Residues 856-932 (TVIKVQNMPF…GSRKVKLVLG (77 aa)) form the RRM 3 domain.

The protein localises to the nucleus. The polypeptide is RNA-binding protein 12 (RBM12) (Homo sapiens (Human)).